The primary structure comprises 218 residues: UPF0173 metal-dependent hydrolase Mpal_1063 (218 aa).

Belongs to the UPF0173 family.

This chain is UPF0173 metal-dependent hydrolase Mpal_1063, found in Methanosphaerula palustris (strain ATCC BAA-1556 / DSM 19958 / E1-9c).